A 317-amino-acid chain; its full sequence is WSCD family member AAEL009094 (317 aa).

A helical transmembrane segment spans residues L8–V28. 3 N-linked (GlcNAc...) asparagine glycosylation sites follow: N150, N226, and N232.

This sequence belongs to the WSCD family.

The protein localises to the membrane. This is WSCD family member AAEL009094 from Aedes aegypti (Yellowfever mosquito).